A 105-amino-acid chain; its full sequence is Iron-sulfur cluster assembly protein CyaY (105 aa).

The protein belongs to the frataxin family.

In terms of biological role, involved in iron-sulfur (Fe-S) cluster assembly. May act as a regulator of Fe-S biogenesis. In Dechloromonas aromatica (strain RCB), this protein is Iron-sulfur cluster assembly protein CyaY.